Consider the following 51-residue polypeptide: MFRWAIIFAVIALLASFLGFGGVAGLSANFAYILLALAVILFIVAFVSRRT.

The next 2 membrane-spanning stretches (helical) occupy residues 6 to 26 (IIFA…VAGL) and 28 to 47 (ANFA…VAFV).

This sequence belongs to the UPF0391 family.

The protein localises to the cell membrane. This chain is UPF0391 membrane protein Psyc_0130, found in Psychrobacter arcticus (strain DSM 17307 / VKM B-2377 / 273-4).